Here is a 125-residue protein sequence, read N- to C-terminus: Thioredoxin H-type (125 aa).

In terms of domain architecture, Thioredoxin spans 2-112 (AEGNVFACHS…LERKVAALAA (111 aa)). Catalysis depends on nucleophile residues Cys38 and Cys41. A disulfide bond links Cys38 and Cys41.

This sequence belongs to the thioredoxin family. Plant H-type subfamily.

The protein localises to the cytoplasm. Its function is as follows. Participates in various redox reactions through the reversible oxidation of the active center dithiol to a disulfide. The H form is known to activate a number of cytosolic enzymes. This Picea mariana (Black spruce) protein is Thioredoxin H-type (SB09).